Here is a 250-residue protein sequence, read N- to C-terminus: Geranylgeranylglyceryl phosphate synthase (250 aa).

Positions 23 and 52 each coordinate Mg(2+). Sn-glycerol 1-phosphate contacts are provided by residues 170–176 (YIEAGSG), 202–203 (GG), and 224–225 (GT).

This sequence belongs to the GGGP/HepGP synthase family. Group II subfamily. Requires Mg(2+) as cofactor.

The protein localises to the cytoplasm. It catalyses the reaction sn-glycerol 1-phosphate + (2E,6E,10E)-geranylgeranyl diphosphate = sn-3-O-(geranylgeranyl)glycerol 1-phosphate + diphosphate. Its pathway is membrane lipid metabolism; glycerophospholipid metabolism. Functionally, prenyltransferase that catalyzes the transfer of the geranylgeranyl moiety of geranylgeranyl diphosphate (GGPP) to the C3 hydroxyl of sn-glycerol-1-phosphate (G1P). This reaction is the first ether-bond-formation step in the biosynthesis of archaeal membrane lipids. This Methanobrevibacter smithii (strain ATCC 35061 / DSM 861 / OCM 144 / PS) protein is Geranylgeranylglyceryl phosphate synthase.